The sequence spans 305 residues: Glycine--tRNA ligase alpha subunit (305 aa).

It belongs to the class-II aminoacyl-tRNA synthetase family. Tetramer of two alpha and two beta subunits.

It localises to the cytoplasm. The enzyme catalyses tRNA(Gly) + glycine + ATP = glycyl-tRNA(Gly) + AMP + diphosphate. The sequence is that of Glycine--tRNA ligase alpha subunit from Ligilactobacillus salivarius (strain UCC118) (Lactobacillus salivarius).